The chain runs to 177 residues: ATP synthase subunit delta 1 (177 aa).

This sequence belongs to the ATPase delta chain family. In terms of assembly, F-type ATPases have 2 components, F(1) - the catalytic core - and F(0) - the membrane proton channel. F(1) has five subunits: alpha(3), beta(3), gamma(1), delta(1), epsilon(1). F(0) has three main subunits: a(1), b(2) and c(10-14). The alpha and beta chains form an alternating ring which encloses part of the gamma chain. F(1) is attached to F(0) by a central stalk formed by the gamma and epsilon chains, while a peripheral stalk is formed by the delta and b chains.

The protein resides in the cell inner membrane. Functionally, f(1)F(0) ATP synthase produces ATP from ADP in the presence of a proton or sodium gradient. F-type ATPases consist of two structural domains, F(1) containing the extramembraneous catalytic core and F(0) containing the membrane proton channel, linked together by a central stalk and a peripheral stalk. During catalysis, ATP synthesis in the catalytic domain of F(1) is coupled via a rotary mechanism of the central stalk subunits to proton translocation. Its function is as follows. This protein is part of the stalk that links CF(0) to CF(1). It either transmits conformational changes from CF(0) to CF(1) or is implicated in proton conduction. This chain is ATP synthase subunit delta 1, found in Photobacterium profundum (strain SS9).